The following is a 161-amino-acid chain: Nucleotide-binding protein Geob_0921 (161 aa).

This sequence belongs to the YajQ family.

In terms of biological role, nucleotide-binding protein. The chain is Nucleotide-binding protein Geob_0921 from Geotalea daltonii (strain DSM 22248 / JCM 15807 / FRC-32) (Geobacter daltonii).